The sequence spans 622 residues: Palmitoyltransferase pfa3 (622 aa).

Residues 1-38 (MDATPYTTSSTSTALDSPSSLSATMARRWARKLERYCC) are Cytoplasmic-facing. Residues 39–59 (TCVTYFPLAFVYSMTSWAAYV) form a helical membrane-spanning segment. The Vacuolar portion of the chain corresponds to 60 to 76 (DVSLSTTPSRVTWLGHS). The chain crosses the membrane as a helical span at residues 77–97 (YGFIAVVLYLLANWCYTYAVF). The Cytoplasmic segment spans residues 98 to 175 (TSPGSTTNEY…ATCVGLRNHK (78 aa)). One can recognise a DHHC domain in the interval 132 to 182 (RFCKKCQARKPDRAHHCSTCRRCVLKMDHHCPWLATCVGLRNHKAFLLFLI). The chain crosses the membrane as a helical span at residues 176–196 (AFLLFLIYTSVFCWVSFAGSA). At 197 to 217 (SWVWEEIMSNTTYVETLMPVN) the chain is on the vacuolar side. The helical transmembrane segment at 218–238 (YIMLSVISGIIGIVLSAFCGW) threads the bilayer. Over 239 to 622 (HIYLASRGQT…EGRSNDDGVD (384 aa)) the chain is Cytoplasmic. 3 disordered regions span residues 298-334 (PGVT…ELQA), 419-507 (REEQ…YADD), and 533-622 (DDVL…DGVD). Over residues 302 to 311 (RPEEGEEMRR) the composition is skewed to basic and acidic residues. Residues 313–330 (TTPSGSSQRNDLASQHNP) are compositionally biased toward polar residues. The span at 419–428 (REEQRQRERQ) shows a compositional bias: basic and acidic residues. A compositionally biased stretch (polar residues) spans 443 to 455 (YTPTWTPPNQQHP). Over residues 466–488 (PSSQPQTQRNSNSSSPSFTPSRR) the composition is skewed to low complexity. Residues 533 to 547 (DDVLNDDDDDDEDYF) are compositionally biased toward acidic residues. Basic and acidic residues predominate over residues 610 to 622 (NGEEGRSNDDGVD).

This sequence belongs to the DHHC palmitoyltransferase family. PFA3 subfamily. Post-translationally, autopalmitoylated.

It is found in the vacuole membrane. It catalyses the reaction L-cysteinyl-[protein] + hexadecanoyl-CoA = S-hexadecanoyl-L-cysteinyl-[protein] + CoA. In terms of biological role, palmitoyltransferase specific for vac8. Palmitoylates vac8 at one or more of its N-terminal cysteine residues, which is required for its proper membrane localization. This chain is Palmitoyltransferase pfa3 (ptr-3), found in Neurospora crassa (strain ATCC 24698 / 74-OR23-1A / CBS 708.71 / DSM 1257 / FGSC 987).